We begin with the raw amino-acid sequence, 195 residues long: Toxin protein Tse4 (195 aa).

The next 4 helical transmembrane spans lie at 20-40, 116-136, 140-160, and 171-191; these read ASGG…ITLL, YVEL…LFGL, LLAA…GASM, and ALLM…AAYL.

The protein localises to the host membrane. The protein resides in the secreted. Its function is as follows. Toxin secreted by the H1 type VI (H1-T6SS) secretion system into the periplasm of recipient cells. This Pseudomonas aeruginosa (strain ATCC 15692 / DSM 22644 / CIP 104116 / JCM 14847 / LMG 12228 / 1C / PRS 101 / PAO1) protein is Toxin protein Tse4.